Consider the following 142-residue polypeptide: AP-2 complex subunit sigma (142 aa).

The protein belongs to the adaptor complexes small subunit family. In terms of assembly, adaptor protein complex 2 (AP-2) is a heterotetramer composed of two large adaptins (alpha-type and beta-type subunits), a medium adaptin (mu-type subunit AP50) and a small adaptin (sigma-type subunit AP17).

It is found in the cell membrane. The protein resides in the membrane. Its subcellular location is the coated pit. Functionally, component of the adaptor complexes which link clathrin to receptors in coated vesicles. Clathrin-associated protein complexes are believed to interact with the cytoplasmic tails of membrane proteins, leading to their selection and concentration. This is AP-2 complex subunit sigma (ap2s1) from Dictyostelium discoideum (Social amoeba).